Reading from the N-terminus, the 641-residue chain is MTTSRLPFSLTKTKNFYEELNNWIGDVFYDILPEKGFDLRDEQVFMAFQLERAFKEKKVMFAEAGVGTGKTLVYLLFAISYARYVGKPAIIACADETLIEQLVKKEGDISKLAEHLDLKIDTRLSKSHEQYLCLKKLEKTMQRSDDDKWLDLYESLPSFVHESQAMQRFYPYGDRKQYANLSNEEWSDVSYDSFQDCLTCDMRHRCGLTLSRDYYRKSTDLIICSHDFYMEHVWTEESRKREGQLPLLPDHSAVVFDEGHLLEFAAQKALTYRVKQSTLELFLERLLQNDIREEFAELIEDALLANDEFFYVLSEESKEVAGSHRLEIKNDHRVKKAADELCRLLDKIGEALVFESEMYTIDQYELSVVEEYVEQMAYSLSLYQKDAISWLEKKEAESTFVVMPRTVAEVLGEKVFSKKIPYIFSSATLSEGGSFDYIADSLGIHDYLSLTVDSPYDYDEQMSINLYAKTDMDAEQKTAETIETIKRYKGRTLVLFPSFEELNEFKELSAAWELPYPIFFEGDEEISSLVEKFQEEEETVLCSVHLWEGLDIPGDALKNVTIWSLPFPPHDPVFTAKRNGAKKDPFEEVDLPYMLLRVRQGIGRLIRSNQDSGSIHIYAGGENERIIDEVKKVLPVEPHMM.

The 275-residue stretch at 29–303 (YDILPEKGFD…EFAELIEDAL (275 aa)) folds into the Helicase ATP-binding domain. 64–71 (AGVGTGKT) lines the ATP pocket. [4Fe-4S] cluster contacts are provided by Cys133, Cys197, Cys200, and Cys206. Residues 257 to 260 (DEGH) carry the DEGH box motif.

It belongs to the helicase family. DinG subfamily. [4Fe-4S] cluster serves as cofactor.

The catalysed reaction is Couples ATP hydrolysis with the unwinding of duplex DNA at the replication fork by translocating in the 5'-3' direction. This creates two antiparallel DNA single strands (ssDNA). The leading ssDNA polymer is the template for DNA polymerase III holoenzyme which synthesizes a continuous strand.. The enzyme catalyses ATP + H2O = ADP + phosphate + H(+). In terms of biological role, might be a 5'-3' DNA helicase. The polypeptide is Probable ATP-dependent helicase YpvA (ypvA) (Bacillus subtilis (strain 168)).